A 255-amino-acid chain; its full sequence is Taurine import ATP-binding protein TauB (255 aa).

An ABC transporter domain is found at 2-229 (LQISHLYADY…RFVAGESSRS (228 aa)). Position 34-41 (34-41 (GPSGCGKT)) interacts with ATP.

Belongs to the ABC transporter superfamily. Taurine importer (TC 3.A.1.17.1) family. In terms of assembly, the complex is composed of two ATP-binding proteins (TauB), two transmembrane proteins (TauC) and a solute-binding protein (TauA).

It localises to the cell inner membrane. It carries out the reaction taurine(out) + ATP + H2O = taurine(in) + ADP + phosphate + H(+). Part of the ABC transporter complex TauABC involved in taurine import. Responsible for energy coupling to the transport system. The polypeptide is Taurine import ATP-binding protein TauB (Escherichia coli (strain K12)).